Reading from the N-terminus, the 203-residue chain is DNA-directed RNA polymerase subunit gamma (203 aa).

4 residues coordinate Zn(2+): Cys-34, Cys-36, Cys-49, and Cys-52.

It belongs to the RNA polymerase beta' chain family. RpoC1 subfamily. In terms of assembly, in cyanobacteria the RNAP catalytic core is composed of 2 alpha, 1 beta, 1 beta', 1 gamma and 1 omega subunit. When a sigma factor is associated with the core the holoenzyme is formed, which can initiate transcription. Requires Zn(2+) as cofactor.

The catalysed reaction is RNA(n) + a ribonucleoside 5'-triphosphate = RNA(n+1) + diphosphate. Its function is as follows. DNA-dependent RNA polymerase catalyzes the transcription of DNA into RNA using the four ribonucleoside triphosphates as substrates. This chain is DNA-directed RNA polymerase subunit gamma (rpoC1), found in Fischerella muscicola.